The primary structure comprises 272 residues: Putative pyruvate, phosphate dikinase regulatory protein 1 (272 aa).

151 to 158 (GISRTSKT) serves as a coordination point for ADP.

Belongs to the pyruvate, phosphate/water dikinase regulatory protein family. PDRP subfamily.

It carries out the reaction N(tele)-phospho-L-histidyl/L-threonyl-[pyruvate, phosphate dikinase] + ADP = N(tele)-phospho-L-histidyl/O-phospho-L-threonyl-[pyruvate, phosphate dikinase] + AMP + H(+). It catalyses the reaction N(tele)-phospho-L-histidyl/O-phospho-L-threonyl-[pyruvate, phosphate dikinase] + phosphate + H(+) = N(tele)-phospho-L-histidyl/L-threonyl-[pyruvate, phosphate dikinase] + diphosphate. Bifunctional serine/threonine kinase and phosphorylase involved in the regulation of the pyruvate, phosphate dikinase (PPDK) by catalyzing its phosphorylation/dephosphorylation. The protein is Putative pyruvate, phosphate dikinase regulatory protein 1 of Staphylococcus epidermidis (strain ATCC 35984 / DSM 28319 / BCRC 17069 / CCUG 31568 / BM 3577 / RP62A).